The sequence spans 209 residues: Ubiquitin-conjugating enzyme E2 S (209 aa).

The UBC core domain occupies 14 to 160 (QTIRQVMREL…ARMMTEIHAQ (147 aa)). Cys-98 functions as the Glycyl thioester intermediate in the catalytic mechanism. Positions 164–209 (CAAGAAGDSKDDDGPSTKKHAGLDKKLQDKKKEKLLKEKKRMLKRL) are disordered. Residues 171-199 (DSKDDDGPSTKKHAGLDKKLQDKKKEKLL) show a composition bias toward basic and acidic residues. The span at 200–209 (KEKKRMLKRL) shows a compositional bias: basic residues.

Belongs to the ubiquitin-conjugating enzyme family.

It carries out the reaction S-ubiquitinyl-[E1 ubiquitin-activating enzyme]-L-cysteine + [E2 ubiquitin-conjugating enzyme]-L-cysteine = [E1 ubiquitin-activating enzyme]-L-cysteine + S-ubiquitinyl-[E2 ubiquitin-conjugating enzyme]-L-cysteine.. Its pathway is protein modification; protein ubiquitination. Its function is as follows. Catalyzes the covalent attachment of ubiquitin to other proteins. Acts as an essential factor of the anaphase promoting complex/cyclosome (APC/C), a cell cycle-regulated ubiquitin ligase that controls progression through mitosis. Acts by specifically elongating polyubiquitin chains initiated by the E2 enzyme vih/UbcH10 on APC/C substrates, enhancing the degradation of APC/C substrates by the proteasome and promoting mitotic exit. The sequence is that of Ubiquitin-conjugating enzyme E2 S from Drosophila ananassae (Fruit fly).